The primary structure comprises 257 residues: Flavodoxin/ferredoxin--NADP reductase (257 aa).

In terms of domain architecture, FAD-binding FR-type spans 2-110 (NPWINANVLK…EKSFGFFTLD (109 aa)). Residues 59 to 62 (RAYS), Tyr75, 83 to 85 (KLS), and Thr125 contribute to the FAD site. Residues 152-153 (VR), 182-183 (SR), Arg193, 223-225 (NPA), and Asp229 each bind NADP(+). Position 256 to 257 (256 to 257 (YW)) interacts with FAD.

This sequence belongs to the ferredoxin--NADP reductase type 1 family. FAD serves as cofactor.

The protein localises to the cytoplasm. The enzyme catalyses 2 reduced [2Fe-2S]-[ferredoxin] + NADP(+) + H(+) = 2 oxidized [2Fe-2S]-[ferredoxin] + NADPH. It carries out the reaction reduced [flavodoxin] + NADP(+) = oxidized [flavodoxin] + NADPH + 2 H(+). Functionally, transports electrons between flavodoxin or ferredoxin and NADPH. The chain is Flavodoxin/ferredoxin--NADP reductase (fpr) from Buchnera aphidicola subsp. Schizaphis graminum (strain Sg).